Reading from the N-terminus, the 385-residue chain is 5'-AMP-activated protein kinase catalytic subunit alpha-1 (385 aa).

The region spanning 1 to 229 (DGRVKIGHYI…IKDIREHEWF (229 aa)) is the Protein kinase domain. Phosphothreonine is present on Thr-14. An ATP-binding site is contributed by 15 to 22 (LGVGTFGK). The active-site Proton acceptor is Asp-100. Position 133 is a phosphothreonine; by LKB1 and CaMKK2 (Thr-133). Thr-219 and Thr-276 each carry phosphothreonine. Residues 252 to 297 (EALKQDPLAVAYHLIIDNRDFYLATSPPDSFLDDHHLTRVPFLVAE) are AIS. Residue Ser-277 is modified to Phosphoserine. At Ser-281 the chain carries Phosphoserine; by ULK1. A Phosphothreonine; by ULK1 modification is found at Thr-289. Position 298 is a phosphothreonine (Thr-298). A phosphoserine mark is found at Ser-353 and Ser-383.

It belongs to the protein kinase superfamily. CAMK Ser/Thr protein kinase family. SNF1 subfamily. In terms of assembly, AMPK is a heterotrimer of an alpha catalytic subunit (PRKAA1 or PRKAA2), a beta (PRKAB1 or PRKAB2) and a gamma non-catalytic subunits (PRKAG1, PRKAG2 or PRKAG3). Interacts with FNIP1 and FNIP2. The cofactor is Mg(2+). Ubiquitinated. Post-translationally, phosphorylated at Thr-133 by STK11/LKB1 in complex with STE20-related adapter-alpha (STRADA) pseudo kinase and CAB39. Also phosphorylated at Thr-133 by CAMKK2; triggered by a rise in intracellular calcium ions, without detectable changes in the AMP/ATP ratio. CAMKK1 can also phosphorylate Thr-133, but at a much lower level. Dephosphorylated by protein phosphatase 2A and 2C (PP2A and PP2C). Phosphorylated by ULK1 and ULK2; leading to negatively regulate AMPK activity and suggesting the existence of a regulatory feedback loop between ULK1, ULK2 and AMPK. Dephosphorylated by PPM1A and PPM1B. In terms of processing, glycosylated; O-GlcNAcylated by OGT, promoting the AMP-activated protein kinase (AMPK) activity.

Its subcellular location is the cytoplasm. It localises to the nucleus. The catalysed reaction is L-seryl-[protein] + ATP = O-phospho-L-seryl-[protein] + ADP + H(+). The enzyme catalyses L-threonyl-[protein] + ATP = O-phospho-L-threonyl-[protein] + ADP + H(+). It carries out the reaction L-seryl-[acetyl-CoA carboxylase] + ATP = O-phospho-L-seryl-[acetyl-CoA carboxylase] + ADP + H(+). It catalyses the reaction L-seryl-[3-hydroxy-3-methylglutaryl-coenzyme A reductase] + ATP = O-phospho-L-seryl-[3-hydroxy-3-methylglutaryl-coenzyme A reductase] + ADP + H(+). The catalysed reaction is L-seryl-[tau protein] + ATP = O-phospho-L-seryl-[tau protein] + ADP + H(+). The enzyme catalyses L-threonyl-[tau protein] + ATP = O-phospho-L-threonyl-[tau protein] + ADP + H(+). Activated by phosphorylation on Thr-133. Binding of AMP to non-catalytic gamma subunit (PRKAG1, PRKAG2 or PRKAG3) results in allosteric activation, inducing phosphorylation on Thr-133. AMP-binding to gamma subunit also sustains activity by preventing dephosphorylation of Thr-133. ADP also stimulates Thr-133 phosphorylation, without stimulating already phosphorylated AMPK. ATP promotes dephosphorylation of Thr-133, rendering the enzyme inactive. Under physiological conditions AMPK mainly exists in its inactive form in complex with ATP, which is much more abundant than AMP. Selectively inhibited by compound C (6-[4-(2-Piperidin-1-yl-ethoxy)-phenyl)]-3-pyridin-4-yl-pyyrazolo[1,5-a] pyrimidine. Activated by resveratrol, a natural polyphenol present in red wine, and S17834, a synthetic polyphenol. Its function is as follows. Catalytic subunit of AMP-activated protein kinase (AMPK), an energy sensor protein kinase that plays a key role in regulating cellular energy metabolism. In response to reduction of intracellular ATP levels, AMPK activates energy-producing pathways and inhibits energy-consuming processes: inhibits protein, carbohydrate and lipid biosynthesis, as well as cell growth and proliferation. AMPK acts via direct phosphorylation of metabolic enzymes, and by longer-term effects via phosphorylation of transcription regulators. Regulates lipid synthesis by phosphorylating and inactivating lipid metabolic enzymes such as ACACA, ACACB, GYS1, HMGCR and LIPE; regulates fatty acid and cholesterol synthesis by phosphorylating acetyl-CoA carboxylase (ACACA and ACACB) and hormone-sensitive lipase (LIPE) enzymes, respectively. Promotes lipolysis of lipid droplets by mediating phosphorylation of isoform 1 of CHKA (CHKalpha2). Regulates insulin-signaling and glycolysis by phosphorylating IRS1, PFKFB2 and PFKFB3. AMPK stimulates glucose uptake in muscle by increasing the translocation of the glucose transporter SLC2A4/GLUT4 to the plasma membrane, possibly by mediating phosphorylation of TBC1D4/AS160. Regulates transcription and chromatin structure by phosphorylating transcription regulators involved in energy metabolism such as CRTC2/TORC2, FOXO3, histone H2B, HDAC5, MEF2C, MLXIPL/ChREBP, EP300, HNF4A, p53/TP53, SREBF1, SREBF2 and PPARGC1A. Acts as a key regulator of glucose homeostasis in liver by phosphorylating CRTC2/TORC2, leading to CRTC2/TORC2 sequestration in the cytoplasm. In response to stress, phosphorylates 'Ser-36' of histone H2B (H2BS36ph), leading to promote transcription. Acts as a key regulator of cell growth and proliferation by phosphorylating FNIP1, TSC2, RPTOR, WDR24 and ATG1/ULK1: in response to nutrient limitation, negatively regulates the mTORC1 complex by phosphorylating RPTOR component of the mTORC1 complex and by phosphorylating and activating TSC2. Also phosphorylates and inhibits GATOR2 subunit WDR24 in response to nutrient limitation, leading to suppress glucose-mediated mTORC1 activation. In response to energetic stress, phosphorylates FNIP1, inactivating the non-canonical mTORC1 signaling, thereby promoting nuclear translocation of TFEB and TFE3, and inducing transcription of lysosomal or autophagy genes. In response to nutrient limitation, promotes autophagy by phosphorylating and activating ATG1/ULK1. In that process also activates WDR45/WIPI4. Phosphorylates CASP6, thereby preventing its autoprocessing and subsequent activation. In response to nutrient limitation, phosphorylates transcription factor FOXO3 promoting FOXO3 mitochondrial import. Also acts as a regulator of cellular polarity by remodeling the actin cytoskeleton; probably by indirectly activating myosin. AMPK also acts as a regulator of circadian rhythm by mediating phosphorylation of CRY1, leading to destabilize it. May regulate the Wnt signaling pathway by phosphorylating CTNNB1, leading to stabilize it. Also has tau-protein kinase activity: in response to amyloid beta A4 protein (APP) exposure, activated by CAMKK2, leading to phosphorylation of MAPT/TAU; however the relevance of such data remains unclear in vivo. Also phosphorylates CFTR, EEF2K, KLC1, NOS3 and SLC12A1. Regulates hepatic lipogenesis. Activated via SIRT3, represses sterol regulatory element-binding protein (SREBP) transcriptional activities and ATP-consuming lipogenesis to restore cellular energy balance. Upon stress, regulates mitochondrial fragmentation through phosphorylation of MTFR1L. This is 5'-AMP-activated protein kinase catalytic subunit alpha-1 (PRKAA1) from Sus scrofa (Pig).